Here is a 210-residue protein sequence, read N- to C-terminus: Putative 4-hydroxy-4-methyl-2-oxoglutarate aldolase (210 aa).

Substrate-binding positions include G87 to V90 and R109. D110 contacts a divalent metal cation.

This sequence belongs to the class II aldolase/RraA-like family. In terms of assembly, homotrimer. A divalent metal cation serves as cofactor.

The enzyme catalyses 4-hydroxy-4-methyl-2-oxoglutarate = 2 pyruvate. It catalyses the reaction oxaloacetate + H(+) = pyruvate + CO2. In terms of biological role, catalyzes the aldol cleavage of 4-hydroxy-4-methyl-2-oxoglutarate (HMG) into 2 molecules of pyruvate. Also contains a secondary oxaloacetate (OAA) decarboxylase activity due to the common pyruvate enolate transition state formed following C-C bond cleavage in the retro-aldol and decarboxylation reactions. The protein is Putative 4-hydroxy-4-methyl-2-oxoglutarate aldolase of Halalkalibacterium halodurans (strain ATCC BAA-125 / DSM 18197 / FERM 7344 / JCM 9153 / C-125) (Bacillus halodurans).